Consider the following 311-residue polypeptide: tRNA-cytidine(32) 2-sulfurtransferase (311 aa).

The PP-loop motif signature appears at 47-52 (SGGKDS). 3 residues coordinate [4Fe-4S] cluster: cysteine 122, cysteine 125, and cysteine 213.

It belongs to the TtcA family. As to quaternary structure, homodimer. Mg(2+) serves as cofactor. The cofactor is [4Fe-4S] cluster.

It is found in the cytoplasm. The enzyme catalyses cytidine(32) in tRNA + S-sulfanyl-L-cysteinyl-[cysteine desulfurase] + AH2 + ATP = 2-thiocytidine(32) in tRNA + L-cysteinyl-[cysteine desulfurase] + A + AMP + diphosphate + H(+). It participates in tRNA modification. Functionally, catalyzes the ATP-dependent 2-thiolation of cytidine in position 32 of tRNA, to form 2-thiocytidine (s(2)C32). The sulfur atoms are provided by the cysteine/cysteine desulfurase (IscS) system. The chain is tRNA-cytidine(32) 2-sulfurtransferase from Escherichia coli O7:K1 (strain IAI39 / ExPEC).